Reading from the N-terminus, the 181-residue chain is TATA-box-binding protein (181 aa).

Repeat copies occupy residues 7 to 83 (IVNV…MEYL) and 98 to 173 (VQNM…KNTV).

It belongs to the TBP family.

General factor that plays a role in the activation of archaeal genes transcribed by RNA polymerase. Binds specifically to the TATA box promoter element which lies close to the position of transcription initiation. The chain is TATA-box-binding protein from Methanococcus aeolicus (strain ATCC BAA-1280 / DSM 17508 / OCM 812 / Nankai-3).